Reading from the N-terminus, the 309-residue chain is HPr kinase/phosphorylase (309 aa).

Catalysis depends on residues His-138 and Lys-159. Position 153–160 (153–160) interacts with ATP; sequence GKSGIGKS. A Mg(2+)-binding site is contributed by Ser-160. Residue Asp-177 is the Proton acceptor; for phosphorylation activity. Proton donor; for dephosphorylation activity of the active site. The segment at 201–210 is important for the catalytic mechanism of both phosphorylation and dephosphorylation; it reads IEVRGIGILD. Mg(2+) is bound at residue Glu-202. Arg-243 is an active-site residue. The interval 264-269 is important for the catalytic mechanism of dephosphorylation; the sequence is PIKPAR.

This sequence belongs to the HPrK/P family. In terms of assembly, homohexamer. Mg(2+) serves as cofactor.

The enzyme catalyses [HPr protein]-L-serine + ATP = [HPr protein]-O-phospho-L-serine + ADP + H(+). It carries out the reaction [HPr protein]-O-phospho-L-serine + phosphate + H(+) = [HPr protein]-L-serine + diphosphate. Its function is as follows. Catalyzes the ATP- as well as the pyrophosphate-dependent phosphorylation of a specific serine residue in HPr, a phosphocarrier protein of the phosphoenolpyruvate-dependent sugar phosphotransferase system (PTS). HprK/P also catalyzes the pyrophosphate-producing, inorganic phosphate-dependent dephosphorylation (phosphorolysis) of seryl-phosphorylated HPr (P-Ser-HPr). The two antagonistic activities of HprK/P are regulated by several intracellular metabolites, which change their concentration in response to the absence or presence of rapidly metabolisable carbon sources (glucose, fructose, etc.) in the growth medium. Therefore, by controlling the phosphorylation state of HPr, HPrK/P is a sensor enzyme that plays a major role in the regulation of carbon metabolism and sugar transport: it mediates carbon catabolite repression (CCR), and regulates PTS-catalyzed carbohydrate uptake and inducer exclusion. This Alkaliphilus metalliredigens (strain QYMF) protein is HPr kinase/phosphorylase.